The chain runs to 484 residues: Aspartyl/glutamyl-tRNA(Asn/Gln) amidotransferase subunit B (484 aa).

Belongs to the GatB/GatE family. GatB subfamily. Heterotrimer of A, B and C subunits.

The catalysed reaction is L-glutamyl-tRNA(Gln) + L-glutamine + ATP + H2O = L-glutaminyl-tRNA(Gln) + L-glutamate + ADP + phosphate + H(+). It carries out the reaction L-aspartyl-tRNA(Asn) + L-glutamine + ATP + H2O = L-asparaginyl-tRNA(Asn) + L-glutamate + ADP + phosphate + 2 H(+). Its function is as follows. Allows the formation of correctly charged Asn-tRNA(Asn) or Gln-tRNA(Gln) through the transamidation of misacylated Asp-tRNA(Asn) or Glu-tRNA(Gln) in organisms which lack either or both of asparaginyl-tRNA or glutaminyl-tRNA synthetases. The reaction takes place in the presence of glutamine and ATP through an activated phospho-Asp-tRNA(Asn) or phospho-Glu-tRNA(Gln). This is Aspartyl/glutamyl-tRNA(Asn/Gln) amidotransferase subunit B from Anaeromyxobacter dehalogenans (strain 2CP-C).